The following is a 251-amino-acid chain: 3-deoxy-manno-octulosonate cytidylyltransferase (251 aa).

The protein belongs to the KdsB family.

The protein resides in the cytoplasm. The catalysed reaction is 3-deoxy-alpha-D-manno-oct-2-ulosonate + CTP = CMP-3-deoxy-beta-D-manno-octulosonate + diphosphate. It participates in nucleotide-sugar biosynthesis; CMP-3-deoxy-D-manno-octulosonate biosynthesis; CMP-3-deoxy-D-manno-octulosonate from 3-deoxy-D-manno-octulosonate and CTP: step 1/1. The protein operates within bacterial outer membrane biogenesis; lipopolysaccharide biosynthesis. Activates KDO (a required 8-carbon sugar) for incorporation into bacterial lipopolysaccharide in Gram-negative bacteria. This chain is 3-deoxy-manno-octulosonate cytidylyltransferase, found in Agrobacterium fabrum (strain C58 / ATCC 33970) (Agrobacterium tumefaciens (strain C58)).